The primary structure comprises 354 residues: uncharacterized protein (354 aa).

The first 21 residues, 1-21 (MFQKKTYAVFLILLLMMFTAA), serve as a signal peptide directing secretion. A lipid anchor (N-palmitoyl cysteine) is attached at C22. C22 is lipidated: S-diacylglycerol cysteine.

The protein localises to the cell membrane. It is found in the membrane raft. This is an uncharacterized protein from Bacillus subtilis (strain 168).